A 379-amino-acid polypeptide reads, in one-letter code: Queuine tRNA-ribosyltransferase (379 aa).

D94 functions as the Proton acceptor in the catalytic mechanism. Residues 94 to 98 (DSGGF), D148, Q191, and G218 contribute to the substrate site. Positions 249–255 (GVGSPDS) are RNA binding. D268 serves as the catalytic Nucleophile. Positions 273 to 277 (TRIAR) are RNA binding; important for wobble base 34 recognition. 4 residues coordinate Zn(2+): C306, C308, C311, and H337.

This sequence belongs to the queuine tRNA-ribosyltransferase family. As to quaternary structure, homodimer. Within each dimer, one monomer is responsible for RNA recognition and catalysis, while the other monomer binds to the replacement base PreQ1. Zn(2+) is required as a cofactor.

The enzyme catalyses 7-aminomethyl-7-carbaguanine + guanosine(34) in tRNA = 7-aminomethyl-7-carbaguanosine(34) in tRNA + guanine. It functions in the pathway tRNA modification; tRNA-queuosine biosynthesis. Functionally, catalyzes the base-exchange of a guanine (G) residue with the queuine precursor 7-aminomethyl-7-deazaguanine (PreQ1) at position 34 (anticodon wobble position) in tRNAs with GU(N) anticodons (tRNA-Asp, -Asn, -His and -Tyr). Catalysis occurs through a double-displacement mechanism. The nucleophile active site attacks the C1' of nucleotide 34 to detach the guanine base from the RNA, forming a covalent enzyme-RNA intermediate. The proton acceptor active site deprotonates the incoming PreQ1, allowing a nucleophilic attack on the C1' of the ribose to form the product. After dissociation, two additional enzymatic reactions on the tRNA convert PreQ1 to queuine (Q), resulting in the hypermodified nucleoside queuosine (7-(((4,5-cis-dihydroxy-2-cyclopenten-1-yl)amino)methyl)-7-deazaguanosine). This Listeria monocytogenes serotype 4a (strain HCC23) protein is Queuine tRNA-ribosyltransferase.